Reading from the N-terminus, the 47-residue chain is Accessory gland peptide Acp33A (47 aa).

Residues Met-1–Gly-21 form the signal peptide.

In terms of tissue distribution, main cells of accessory gland and seminal fluid.

It localises to the secreted. Responsible for physiological and behavioral changes in mated female flies. The sequence is that of Accessory gland peptide Acp33A (Acp33A) from Drosophila melanogaster (Fruit fly).